The following is a 241-amino-acid chain: MAMFRNLVASSQHRQHHSHQSLATPSSADSLETQFGCPICLEVYYKPVAIGSCGHTFCGECLQPCLQVSSPLCPLCRMPFDPKKVDKASNVDKQLSSYKAPCRGCSKKVTLAKMRAHISSCPKVQEQMANCPKFVPVLPTSQPIPSNIPNRSTFVCPYCGARNLDQQELVKHCMENHRNDPNKVVCPICSAMPWGDPSYKSANFLQHLLHRHKFSYDTFVDYSIDEEAALQAALALSLSEN.

The tract at residues 8–30 (VASSQHRQHHSHQSLATPSSADS) is disordered. The RING-type zinc finger occupies 37–77 (CPICLEVYYKPVAIGSCGHTFCGECLQPCLQVSSPLCPLCR). Residues cysteine 102, cysteine 105, histidine 117, and cysteine 121 each contribute to the Zn(2+) site. A C2HC RNF-type zinc finger spans residues 102 to 121 (CRGCSKKVTLAKMRAHISSC). The UIM domain maps to 225 to 241 (DEEAALQAALALSLSEN).

The protein localises to the cytoplasm. It catalyses the reaction S-ubiquitinyl-[E2 ubiquitin-conjugating enzyme]-L-cysteine + [acceptor protein]-L-lysine = [E2 ubiquitin-conjugating enzyme]-L-cysteine + N(6)-ubiquitinyl-[acceptor protein]-L-lysine.. Its pathway is protein modification; protein ubiquitination. Functionally, E3 ubiquitin-protein ligase that promotes the ubiquitination of different substrates. This is E3 ubiquitin-protein ligase RNF166 (rnf166) from Xenopus laevis (African clawed frog).